The sequence spans 123 residues: Small ribosomal subunit protein uS12 (123 aa).

Asp89 carries the post-translational modification 3-methylthioaspartic acid.

It belongs to the universal ribosomal protein uS12 family. As to quaternary structure, part of the 30S ribosomal subunit. Contacts proteins S8 and S17. May interact with IF1 in the 30S initiation complex.

In terms of biological role, with S4 and S5 plays an important role in translational accuracy. Its function is as follows. Interacts with and stabilizes bases of the 16S rRNA that are involved in tRNA selection in the A site and with the mRNA backbone. Located at the interface of the 30S and 50S subunits, it traverses the body of the 30S subunit contacting proteins on the other side and probably holding the rRNA structure together. The combined cluster of proteins S8, S12 and S17 appears to hold together the shoulder and platform of the 30S subunit. The polypeptide is Small ribosomal subunit protein uS12 (Rhodopseudomonas palustris (strain HaA2)).